The chain runs to 486 residues: Protein hold'em (486 aa).

The OB DNA-binding region spans 166 to 285; that stretch reads IITTNVNLLV…DCRLLLAFAA (120 aa).

It belongs to the MEIOB family. In terms of assembly, interacts with mei-9 and Ercc1.

Its function is as follows. Single-stranded DNA-binding protein required for meiosis. May be involved in the resolution of recombination intermediates into crossovers in the meiotic recombination pathway. The sequence is that of Protein hold'em (hdm) from Drosophila melanogaster (Fruit fly).